A 340-amino-acid polypeptide reads, in one-letter code: Ketol-acid reductoisomerase (NADP(+)) (340 aa).

Residues valine 3 to threonine 182 form the KARI N-terminal Rossmann domain. NADP(+)-binding positions include tyrosine 26–glutamine 29, arginine 49, serine 53, and aspartate 83–glutamine 86. The active site involves histidine 108. Glycine 134 contributes to the NADP(+) binding site. Residues threonine 183–valine 328 enclose the KARI C-terminal knotted domain. Mg(2+)-binding residues include aspartate 191, glutamate 195, glutamate 227, and glutamate 231. Position 252 (serine 252) interacts with substrate.

It belongs to the ketol-acid reductoisomerase family. Requires Mg(2+) as cofactor.

It catalyses the reaction (2R)-2,3-dihydroxy-3-methylbutanoate + NADP(+) = (2S)-2-acetolactate + NADPH + H(+). The enzyme catalyses (2R,3R)-2,3-dihydroxy-3-methylpentanoate + NADP(+) = (S)-2-ethyl-2-hydroxy-3-oxobutanoate + NADPH + H(+). The protein operates within amino-acid biosynthesis; L-isoleucine biosynthesis; L-isoleucine from 2-oxobutanoate: step 2/4. Its pathway is amino-acid biosynthesis; L-valine biosynthesis; L-valine from pyruvate: step 2/4. Its function is as follows. Involved in the biosynthesis of branched-chain amino acids (BCAA). Catalyzes an alkyl-migration followed by a ketol-acid reduction of (S)-2-acetolactate (S2AL) to yield (R)-2,3-dihydroxy-isovalerate. In the isomerase reaction, S2AL is rearranged via a Mg-dependent methyl migration to produce 3-hydroxy-3-methyl-2-ketobutyrate (HMKB). In the reductase reaction, this 2-ketoacid undergoes a metal-dependent reduction by NADPH to yield (R)-2,3-dihydroxy-isovalerate. The polypeptide is Ketol-acid reductoisomerase (NADP(+)) (Streptococcus mutans serotype c (strain ATCC 700610 / UA159)).